A 319-amino-acid polypeptide reads, in one-letter code: Glutathione synthetase (319 aa).

Residues 129–314 (KLAILNFSRF…VAAMFADAVA (186 aa)) enclose the ATP-grasp domain. 155–211 (LKEHGDIIIKPLDGMGGMGIFRLTEKDPNIGSILETLMQLDSRTIMAQRYIPEIVHG) is an ATP binding site. Mg(2+)-binding residues include glutamate 285 and asparagine 287.

This sequence belongs to the prokaryotic GSH synthase family. It depends on Mg(2+) as a cofactor. The cofactor is Mn(2+).

The catalysed reaction is gamma-L-glutamyl-L-cysteine + glycine + ATP = glutathione + ADP + phosphate + H(+). The protein operates within sulfur metabolism; glutathione biosynthesis; glutathione from L-cysteine and L-glutamate: step 2/2. The sequence is that of Glutathione synthetase from Neisseria meningitidis serogroup B (strain ATCC BAA-335 / MC58).